The following is a 319-amino-acid chain: Meiotic drive suppressor wtf16 (319 aa).

Disordered stretches follow at residues 1–22 (MKNNYTSLKSPIDEGDESKTGH) and 35–68 (DSEEEGALPPYSDHARVSNSPNTHRENNPSRSTD). A run of 6 helical transmembrane segments spans residues 73–93 (FLIKLLISFTPIYVLNVLAIC), 110–130 (WTLFGFWCLVCTLALIFLTYF), 153–173 (VVIIWLLWVVICFVLFGCIKF), 187–207 (CSISAALLLFLLYVRLPFWTL), 215–235 (FQVLGVQSCVVIVTKGLMYLF), and 241–261 (ATGYEIEATSLFVIGNFFFFY).

It belongs to the WTF family. In terms of assembly, homomer. Interacts with other proteins that exhibit high sequence similarity.

Its subcellular location is the spore membrane. The protein resides in the vacuole membrane. Acts as a suppressor component of the dual wtf meiotic drive system, and can suppress but not confer meiotic drive by compatible poisons. Wtf meiotic drive systems promote unequal transmission of alleles from the parental zygote to progeny spores by encoding a poison and an antidote from the same locus; the poison is trans-acting and forms toxic aggregates in all spores within an ascus, wherease the antidote is spore-specific and targets aggregates for degradation by the vacuole. Meiotic drive by wtf systems therefore lead to poisoning of all progeny that do not inherit the dual poison/antidote allele, or express a compatible antidote. This Schizosaccharomyces pombe (strain 972 / ATCC 24843) (Fission yeast) protein is Meiotic drive suppressor wtf16.